A 348-amino-acid chain; its full sequence is Protein RecA (348 aa).

64 to 71 (GPESSGKT) serves as a coordination point for ATP. The disordered stretch occupies residues 328 to 348 (DTGGAAPAQEDEAQAQEELEF). Acidic residues predominate over residues 336–348 (QEDEAQAQEELEF).

Belongs to the RecA family.

It localises to the cytoplasm. In terms of biological role, can catalyze the hydrolysis of ATP in the presence of single-stranded DNA, the ATP-dependent uptake of single-stranded DNA by duplex DNA, and the ATP-dependent hybridization of homologous single-stranded DNAs. It interacts with LexA causing its activation and leading to its autocatalytic cleavage. The protein is Protein RecA of Bacillus licheniformis (strain ATCC 14580 / DSM 13 / JCM 2505 / CCUG 7422 / NBRC 12200 / NCIMB 9375 / NCTC 10341 / NRRL NRS-1264 / Gibson 46).